Here is a 628-residue protein sequence, read N- to C-terminus: Phosphomethylpyrimidine synthase (628 aa).

Residues Asn228, Met257, Tyr286, His322, 342-344 (SRG), 383-386 (DGLR), and Glu422 contribute to the substrate site. His426 is a binding site for Zn(2+). Tyr449 contacts substrate. His490 contributes to the Zn(2+) binding site. Residues Cys570, Cys573, and Cys578 each contribute to the [4Fe-4S] cluster site.

It belongs to the ThiC family. As to quaternary structure, homodimer. The cofactor is [4Fe-4S] cluster.

The enzyme catalyses 5-amino-1-(5-phospho-beta-D-ribosyl)imidazole + S-adenosyl-L-methionine = 4-amino-2-methyl-5-(phosphooxymethyl)pyrimidine + CO + 5'-deoxyadenosine + formate + L-methionine + 3 H(+). Its pathway is cofactor biosynthesis; thiamine diphosphate biosynthesis. In terms of biological role, catalyzes the synthesis of the hydroxymethylpyrimidine phosphate (HMP-P) moiety of thiamine from aminoimidazole ribotide (AIR) in a radical S-adenosyl-L-methionine (SAM)-dependent reaction. In Methylibium petroleiphilum (strain ATCC BAA-1232 / LMG 22953 / PM1), this protein is Phosphomethylpyrimidine synthase.